A 240-amino-acid chain; its full sequence is Probable metal transport system ATP-binding protein TM_0124 (240 aa).

The region spanning 4-223 (VEVKNLTYRI…LKKIFTDFDI (220 aa)) is the ABC transporter domain. Position 36-43 (36-43 (GPNGAGKT)) interacts with ATP.

The protein belongs to the ABC transporter superfamily.

Its function is as follows. Part of an ATP-driven transport system TM_0123/TM_0124/TM_0125 for a metal. Probably responsible for energy coupling to the transport system. This chain is Probable metal transport system ATP-binding protein TM_0124, found in Thermotoga maritima (strain ATCC 43589 / DSM 3109 / JCM 10099 / NBRC 100826 / MSB8).